The chain runs to 465 residues: Argininosuccinate lyase (465 aa).

The protein belongs to the lyase 1 family. Argininosuccinate lyase subfamily.

It localises to the cytoplasm. The enzyme catalyses 2-(N(omega)-L-arginino)succinate = fumarate + L-arginine. It participates in amino-acid biosynthesis; L-arginine biosynthesis; L-arginine from L-ornithine and carbamoyl phosphate: step 3/3. The sequence is that of Argininosuccinate lyase from Desulfatibacillum aliphaticivorans.